Consider the following 501-residue polypeptide: MEFSFSSPALYIVYFLLFFVVRQLLKPKSKKKLPPGPRTLPLIGNLHQLSGPLPHRTLKNLSDKHGPLMHVKMGERSAIIVSDARMAKIVLHNNGLAVADRSVNTVASIMTYNSLGVTFAQYGDYLTKLRQIYTLELLSQKKVRSFYSCFEDELDTFVKSIKSNVGQPMVLYEKASAYLYATICRTIFGSVCKEKEKMIKIVKKTSLLSGTPLRLEDLFPSMSIFCRFSKTLNQLRGLLQEMDDILEEIIVEREKASEVSKEAKDDEDMLSVLLRHKWYNPSGAKFRITNADIKAIIFELILAATLSVADVTEWAMVEILRDPKSLKKVYEEVRGICKEKKRVTGYDVEKMEFMRLCVKESTRIHPAAPLLVPRECREDFEVDGYTVPKGAWVITNCWAVQMDPTVWPEPEKFDPERYIRNPMDFYGSNFELIPFGTGRRGCPGILYGVTNAEFMLAAMFYHFDWEIADGKKPEEIDLTEDFGAGCIMKYPLKLVPHLVND.

The chain crosses the membrane as a helical span at residues Met-1 to Val-21. Asn-60 carries an N-linked (GlcNAc...) asparagine glycan. Cys-442 contacts heme.

Belongs to the cytochrome P450 family. It depends on heme as a cofactor. As to expression, expressed in leaf epidermis. Also present in the leaf internal phloem-associated parenchyma (IPAP) inside the mesophyll.

It localises to the membrane. The catalysed reaction is (19E)-geissoschizine + reduced [NADPH--hemoprotein reductase] + O2 = akuammicine + formate + oxidized [NADPH--hemoprotein reductase] + H2O + H(+). The enzyme catalyses (19E)-geissoschizine + reduced [NADPH--hemoprotein reductase] + O2 = 3,17-didehydrostemmadenine + oxidized [NADPH--hemoprotein reductase] + 2 H2O. It functions in the pathway alkaloid biosynthesis. Its function is as follows. Component of the seco-iridoid and derivatives monoterpenoid indole alkaloids (MIAs, e.g. vincristine, quinine, and strychnine) biosynthesis pathway. Catalyzes the oxidation of 19E-geissoschizine to produce a short-lived MIA unstable intermediate which can be spontaneously converted into akuammicine or oxidized by Redox1 and Redox2 to produce stemmadenine and 16S/R-deshydroxymethylstemmadenine (16S/R-DHS). This chain is Geissoschizine oxidase, found in Catharanthus roseus (Madagascar periwinkle).